A 331-amino-acid polypeptide reads, in one-letter code: Major outer membrane protein P.IB (331 aa).

Positions 1–19 (MKKSLIALTLAALPVAAMA) are cleaved as a signal peptide.

This sequence belongs to the Gram-negative porin family. As to quaternary structure, homotrimer.

Its subcellular location is the cell outer membrane. Functionally, serves as a slightly cation selective porin. In Neisseria meningitidis serogroup B, this protein is Major outer membrane protein P.IB (porB).